Consider the following 369-residue polypeptide: Tsukushi (369 aa).

An N-terminal signal peptide occupies residues 1-19 (MQFLAWFNMLLLLPCFSTT). The 41-residue stretch at 20 to 60 (KTCFPGCHCEVESFGLFDSFSLTKVDCSGIGSHIVPVPIPL) folds into the LRRNT domain. LRR repeat units follow at residues 61 to 81 (DTSY…SMLT), 87 to 108 (TLVS…TFSR), 111 to 132 (YLES…CFSS), 134 to 155 (PLGD…VFAS), 161 to 181 (PLNV…HEKS), 184 to 205 (NIQN…QGIP), 206 to 226 (LRYL…DFKG), 229 to 248 (GLIH…SPYS), 254 to 276 (ALQV…VIFG), 279 to 300 (SIQE…VLKY), and 303 to 323 (SLKS…KEGQ). N-linked (GlcNAc...) asparagine glycosylation occurs at N76. N-linked (GlcNAc...) asparagine glycosylation occurs at N189. N-linked (GlcNAc...) asparagine glycosylation is present at N284.

In terms of assembly, forms a ternary complex with chordin/CHRD and BMP4. Interacts with FZD4 (via FZ domain); competes with WNT2B for binding to FZD4, inhibiting Wnt signaling and repressing peripheral eye development. Interacts with BMP4; shows stronger interaction with BMP4 than isoform 2. Interacts with DVR1/VG1; the interaction is inhibited by BMP4. Interacts with BMP7. As to quaternary structure, interacts with FZD4 (via FZ domain); competes with WNT2B for binding to FZD4, inhibiting Wnt signaling and repressing peripheral eye development. Interacts with BMP4; shows weaker interaction with BMP4 than isoform 1. Interacts with DVR1/VG1; the interaction is inhibited by BMP4. Interacts with BMP7. N-glycosylated. During embryonic development, expressed in the middle primitive streak and Hensen's node. Expressed in the peripheral region of the developing eye. Expressed in the presomitic mesoderm during somitogenesis in a NOTCH-dependent manner.

It localises to the secreted. Its function is as follows. Contributes to various developmental events through its interactions with multiple signaling pathways. Dorsalizing factor involved in the induction of Hensen's node by inhibiting bone morphogenetic proteins during gastrulation and by enhancing DVR1/VG1 activity. Wnt signaling inhibitor which competes with WNT2B for binding to Wnt receptor FZD4 and represses WNT2B-dependent development of the peripheral eye. Shows strong bone morphogenetic protein antagonistic activity. Functionally, shows weak bone morphogenetic protein antagonistic activity. This chain is Tsukushi (TSKU), found in Gallus gallus (Chicken).